A 149-amino-acid chain; its full sequence is Putative pre-16S rRNA nuclease (149 aa).

The protein belongs to the YqgF nuclease family.

Its subcellular location is the cytoplasm. In terms of biological role, could be a nuclease involved in processing of the 5'-end of pre-16S rRNA. The protein is Putative pre-16S rRNA nuclease of Burkholderia ambifaria (strain MC40-6).